Consider the following 583-residue polypeptide: CD166 antigen (583 aa).

The first 27 residues, 1–27, serve as a signal peptide directing secretion; the sequence is MESKGASSCRLLFCLLISATVFRPGLG. 2 Ig-like V-type domains span residues 28-120 and 125-234; these read WYTV…TEDN and PTIV…KTIH. Residues 28-527 lie on the Extracellular side of the membrane; the sequence is WYTVNSAYGD…NREKVNDQAK (500 aa). Intrachain disulfides connect cysteine 43/cysteine 113 and cysteine 157/cysteine 220. N-linked (GlcNAc...) asparagine glycosylation is found at asparagine 91, asparagine 95, asparagine 167, asparagine 265, asparagine 306, asparagine 361, asparagine 457, asparagine 480, and asparagine 499. Ig-like C2-type domains lie at 245–328, 333–409, and 416–501; these read PTEQ…TAIT, DLSL…ESLT, and PQIK…LNVS. Cystine bridges form between cysteine 270–cysteine 313, cysteine 354–cysteine 392, and cysteine 435–cysteine 485. The chain crosses the membrane as a helical span at residues 528 to 549; sequence LIVGIVVGLLLAALVAGVVYWL. Over 550-583 the chain is Cytoplasmic; the sequence is YMKKSKTASKHVNKDLGNMEENKKLEENNHKTEA. A disordered region spans residues 562 to 583; the sequence is NKDLGNMEENKKLEENNHKTEA. The span at 569 to 583 shows a compositional bias: basic and acidic residues; sequence EENKKLEENNHKTEA.

Homodimer. Interacts (via extracellular domain) with CD6 (via extracellular domain). Homodimerization and interaction with CD6 involve the same region and cannot occur simultaneously. The affinity for CD6 is much higher than the affinity for self-association. Interacts (via glycosylated extracellular domain) with LGALS1 and LGALS3. Interaction with LGALS1 or LGALS3 inhibits interaction with CD6. Glycosylated. In terms of tissue distribution, detected on hematopoietic stem cells derived from umbilical cord blood. Detected on lymph vessel endothelial cells, skin and tonsil. Detected on peripheral blood monocytes. Detected on monocyte-derived dendritic cells (at protein level). Detected at low levels in spleen, placenta, liver. Expressed by activated T-cells, B-cells, monocytes and thymic epithelial cells. Isoform 1 and isoform 3 are detected in vein and artery endothelial cells, astrocytes, keratinocytes and artery smooth muscle cells. Expressed by neurons in the brain. Restricted expression in tumor cell lines. Detected in highly metastasizing melanoma cell lines.

It is found in the cell membrane. It localises to the cell projection. The protein resides in the axon. Its subcellular location is the dendrite. The protein localises to the secreted. Its function is as follows. Cell adhesion molecule that mediates both heterotypic cell-cell contacts via its interaction with CD6, as well as homotypic cell-cell contacts. Promotes T-cell activation and proliferation via its interactions with CD6. Contributes to the formation and maturation of the immunological synapse via its interactions with CD6. Mediates homotypic interactions with cells that express ALCAM. Acts as a ligand for the LILRB4 receptor, enhancing LILRB4-mediated inhibition of T cell proliferation. Required for normal hematopoietic stem cell engraftment in the bone marrow. Mediates attachment of dendritic cells onto endothelial cells via homotypic interaction. Inhibits endothelial cell migration and promotes endothelial tube formation via homotypic interactions. Required for normal organization of the lymph vessel network. Required for normal hematopoietic stem cell engraftment in the bone marrow. Plays a role in hematopoiesis; required for normal numbers of hematopoietic stem cells in bone marrow. Promotes in vitro osteoblast proliferation and differentiation. Promotes neurite extension, axon growth and axon guidance; axons grow preferentially on surfaces that contain ALCAM. Mediates outgrowth and pathfinding for retinal ganglion cell axons. Inhibits activities of membrane-bound isoforms by competing for the same interaction partners. Inhibits cell attachment via homotypic interactions. Promotes endothelial cell migration. Inhibits endothelial cell tube formation. The protein is CD166 antigen (ALCAM) of Homo sapiens (Human).